Reading from the N-terminus, the 82-residue chain is MALSVQIRAACLLLLLLVSLTAGSVLPSQTRQLTDLRTQDTAGATAGLTPVAQRLRRDTHFPICIFCCGCCRKAICGMCCKT.

An N-terminal signal peptide occupies residues 1 to 23 (MALSVQIRAACLLLLLLVSLTAG). The propeptide occupies 24-53 (SVLPSQTRQLTDLRTQDTAGATAGLTPVAQ). Disulfide bonds link Cys64/Cys80, Cys67/Cys70, Cys68/Cys76, and Cys71/Cys79.

The protein belongs to the hepcidin family. In terms of assembly, interacts with SLC40A1; this interaction promotes SLC40A1 rapid ubiquitination.

It localises to the secreted. Its function is as follows. Liver-produced hormone that constitutes the main circulating regulator of iron absorption and distribution across tissues. Acts by promoting endocytosis and degradation of ferroportin/SLC40A1, leading to the retention of iron in iron-exporting cells and decreased flow of iron into plasma. Controls the major flows of iron into plasma: absorption of dietary iron in the intestine, recycling of iron by macrophages, which phagocytose old erythrocytes and other cells, and mobilization of stored iron from hepatocytes. Has strong antimicrobial activity against E.coli ML35P N.cinerea and weaker against S.epidermidis, S.aureus and group b streptococcus bacteria. Active against the fungus C.albicans. No activity against P.aeruginosa. The polypeptide is Hepcidin (HAMP) (Sus scrofa (Pig)).